Consider the following 488-residue polypeptide: Bifunctional pantoate ligase/cytidylate kinase (488 aa).

Residue 1–8 (MGALHRAH) coordinates ATP. Positions 1–251 (MGALHRAHGQ…CGETRLIDHT (251 aa)) are pantoate--beta-alanine ligase. The active-site Proton donor is the His-8. Gln-36 is a (R)-pantoate binding site. Gln-36 serves as a coordination point for beta-alanine. ATP is bound at residue 125–128 (GEKD). Gln-131 provides a ligand contact to (R)-pantoate. ATP contacts are provided by residues Val-154 and 162 to 165 (CSSR). The tract at residues 252-488 (FLMSRQPIVA…PEEVWPTPGS (237 aa)) is cytidylate kinase.

The protein in the N-terminal section; belongs to the pantothenate synthetase family. This sequence in the C-terminal section; belongs to the cytidylate kinase family. Type 1 subfamily.

The protein resides in the cytoplasm. The catalysed reaction is (R)-pantoate + beta-alanine + ATP = (R)-pantothenate + AMP + diphosphate + H(+). It catalyses the reaction CMP + ATP = CDP + ADP. It carries out the reaction dCMP + ATP = dCDP + ADP. Its pathway is cofactor biosynthesis; (R)-pantothenate biosynthesis; (R)-pantothenate from (R)-pantoate and beta-alanine: step 1/1. In terms of biological role, catalyzes the condensation of pantoate with beta-alanine in an ATP-dependent reaction via a pantoyl-adenylate intermediate. Catalyzes the transfer of a phosphate group from ATP to either CMP or dCMP to form CDP or dCDP and ADP, respectively. This is Bifunctional pantoate ligase/cytidylate kinase from Prochlorococcus marinus (strain MIT 9303).